Reading from the N-terminus, the 859-residue chain is Photoactivated adenylate cyclase subunit beta-like protein FB (859 aa).

Positions 56–149 constitute a BLUF 1 domain; it reads LRRLMYLSKS…GRMYGDWHMK (94 aa). In terms of domain architecture, Guanylate cyclase 1 spans 205 to 333; sequence VVTFIYLVEF…DCINTTSRIA (129 aa). The tract at residues 414 to 449 is disordered; that stretch reads GLPNSQRPPIFDDTPKANRRPRTPGYGGRQRSDSQV. One can recognise a BLUF 2 domain in the interval 471-563; the sequence is LTTLTYISQA…RVYPSEWTLT (93 aa). One can recognise a Guanylate cyclase 2 domain in the interval 619 to 748; the sequence is VMLATDICSF…AVSARVMEVE (130 aa). The disordered stretch occupies residues 813–859; it reads AARSGEKPLTEPEAAKPDFRVSPGRVRHGDSGRRSNSAQGKRSIQVR. Basic and acidic residues predominate over residues 815–831; sequence RSGEKPLTEPEAAKPDF. Polar residues predominate over residues 846–859; the sequence is RSNSAQGKRSIQVR.

This sequence belongs to the adenylyl cyclase class-4/guanylyl cyclase family. As to quaternary structure, heterotetramer of two alpha and two beta subunits.

The protein resides in the cell projection. Its subcellular location is the cilium. It localises to the flagellum. This chain is Photoactivated adenylate cyclase subunit beta-like protein FB, found in Euglena gracilis.